Here is a 215-residue protein sequence, read N- to C-terminus: Transmembrane protein 267 (215 aa).

The next 3 membrane-spanning stretches (helical) occupy residues 77–97 (FGEV…HFFQ), 114–134 (FLHC…AVHL), and 178–198 (SSFY…LMYL).

The protein resides in the membrane. This Mus musculus (Mouse) protein is Transmembrane protein 267.